We begin with the raw amino-acid sequence, 743 residues long: Polyribonucleotide nucleotidyltransferase (743 aa).

2 residues coordinate Mg(2+): Asp489 and Asp495. Positions 556–618 constitute a KH domain; the sequence is PRIEKMHIGK…PCIDAAIGMI (63 aa). In terms of domain architecture, S1 motif spans 628–698; the sequence is GETYPGKITS…KTGKFKLSRK (71 aa). The tract at residues 704–743 is disordered; sequence PEGYVEPQPRERRERREGGREGGRNFERRGGDRDHREPRG.

The protein belongs to the polyribonucleotide nucleotidyltransferase family. Mg(2+) serves as cofactor.

It localises to the cytoplasm. It carries out the reaction RNA(n+1) + phosphate = RNA(n) + a ribonucleoside 5'-diphosphate. In terms of biological role, involved in mRNA degradation. Catalyzes the phosphorolysis of single-stranded polyribonucleotides processively in the 3'- to 5'-direction. This is Polyribonucleotide nucleotidyltransferase from Porphyromonas gingivalis (strain ATCC 33277 / DSM 20709 / CIP 103683 / JCM 12257 / NCTC 11834 / 2561).